Reading from the N-terminus, the 490-residue chain is Alginate production protein AlgE (490 aa).

The signal sequence occupies residues 1–32; the sequence is MNSSRSVNPRPSFAPRALSLAIALLLGAPAFA. 2 stretches are compositionally biased toward polar residues: residues 102 to 115 and 343 to 355; these read DTLQSDTDDGNNSR and QFQQTGLESNRSN. Disordered regions lie at residues 102–121 and 331–355; these read DTLQSDTDDGNNSRNDGREP and ARGSGGGKDGEEQFQQTGLESNRSN.

Belongs to the AlgE family.

Its subcellular location is the cell outer membrane. It functions in the pathway glycan biosynthesis; alginate biosynthesis. Functionally, has non-porin-like, channel-forming properties and probably functions as an alginate permeability pore. The protein is Alginate production protein AlgE (algE) of Pseudomonas aeruginosa (strain ATCC 15692 / DSM 22644 / CIP 104116 / JCM 14847 / LMG 12228 / 1C / PRS 101 / PAO1).